The chain runs to 185 residues: ATP synthase subunit b 2 (185 aa).

Residues 1 to 24 (MADSHGNAKGATAHTEAGGGHKAP) form a disordered region. A helical transmembrane segment spans residues 34–56 (ASQLVSLTIAFVALYLISSRLAL).

Belongs to the ATPase B chain family. In terms of assembly, F-type ATPases have 2 components, F(1) - the catalytic core - and F(0) - the membrane proton channel. F(1) has five subunits: alpha(3), beta(3), gamma(1), delta(1), epsilon(1). F(0) has three main subunits: a(1), b(2) and c(10-14). The alpha and beta chains form an alternating ring which encloses part of the gamma chain. F(1) is attached to F(0) by a central stalk formed by the gamma and epsilon chains, while a peripheral stalk is formed by the delta and b chains.

The protein localises to the cell inner membrane. Functionally, f(1)F(0) ATP synthase produces ATP from ADP in the presence of a proton or sodium gradient. F-type ATPases consist of two structural domains, F(1) containing the extramembraneous catalytic core and F(0) containing the membrane proton channel, linked together by a central stalk and a peripheral stalk. During catalysis, ATP synthesis in the catalytic domain of F(1) is coupled via a rotary mechanism of the central stalk subunits to proton translocation. In terms of biological role, component of the F(0) channel, it forms part of the peripheral stalk, linking F(1) to F(0). The b'-subunit is a diverged and duplicated form of b found in plants and photosynthetic bacteria. This chain is ATP synthase subunit b 2 (atpF2), found in Nitrobacter hamburgensis (strain DSM 10229 / NCIMB 13809 / X14).